The chain runs to 374 residues: dTDP-3-amino-3,4,6-trideoxy-alpha-D-glucose transaminase (374 aa).

Residues Gly-60, Gln-160, 181–186, Tyr-214, Tyr-221, 229–231, and Tyr-316 contribute to the pyridoxal 5'-phosphate site; these read SFYPTK and NSR. Lys-186 bears the N6-(pyridoxal phosphate)lysine mark.

The protein belongs to the degT/dnrJ/eryC1 family. Pyridoxal 5'-phosphate serves as cofactor.

It carries out the reaction dTDP-3-amino-3,4,6-trideoxy-alpha-D-glucose + 2-oxoglutarate = dTDP-3-dehydro-4,6-dideoxy-alpha-D-glucose + L-glutamate. Its pathway is antibiotic biosynthesis. Its function is as follows. Involved in the biosynthesis of the amino sugar dTDP-L-megosamine which is found in the macrolide antibiotic and antiparasitic megalomicin A. Catalyzes the reversible transfer of the amino group from L-glutamate to the C-3 position of dTDP-3-keto-4,6-deoxyglucose to yield dTDP-3-amino-3,4,6-trideoxyglucose. This Micromonospora megalomicea subsp. nigra protein is dTDP-3-amino-3,4,6-trideoxy-alpha-D-glucose transaminase.